Consider the following 320-residue polypeptide: Putative olfactory receptor 2W5 pseudogene (320 aa).

An N-linked (GlcNAc...) asparagine glycan is attached at asparagine 5. 4 helical membrane passes run 30–50, 58–78, 98–118, and 140–160; these read VILIFCILTLVGNTAIILLLV, PMYFFLGNLSFLDLCFTASIA, VAQLYIYMMLGSTECVLLVVM, and LCLQLVTVAWCCGFLNSFIMC. Cysteine 97 and cysteine 179 form a disulfide bridge. Residues 267–320 form a disordered region; that stretch reads LPRSGEVPDSLLHHRHSQHQPPHLHFEEQGCEGDHEETSGVGERGWGASTRGTL. The span at 290 to 304 shows a compositional bias: basic and acidic residues; sequence LHFEEQGCEGDHEET.

This sequence belongs to the G-protein coupled receptor 1 family.

It localises to the cell membrane. In terms of biological role, odorant receptor. The polypeptide is Putative olfactory receptor 2W5 pseudogene (Homo sapiens (Human)).